A 530-amino-acid chain; its full sequence is Hyccin 2 (530 aa).

2 positions are modified to phosphothreonine: T30 and T306. A phosphoserine mark is found at S321 and S341. Residues 328-410 form a disordered region; that stretch reads RREGAEGVNG…DSVVRKQYVQ (83 aa). The segment covering 353 to 373 has biased composition (polar residues); that stretch reads SGASLSSQPIGTKPSSSSQRG. 4 positions are modified to phosphoserine: S430, S442, S444, and S491. The interval 502–530 is disordered; sequence EGKELLSPGAPLTKQSRSPSFNMQLISQV. The segment covering 514-530 has biased composition (polar residues); the sequence is TKQSRSPSFNMQLISQV.

This sequence belongs to the Hyccin family. As to quaternary structure, component of a phosphatidylinositol 4-kinase (PI4K) complex, composed of PI4KA, EFR3 (EFR3A or EFR3B), TTC7 (TTC7A or TTC7B) and HYCC (HYCC1 or HYCC2).

The protein localises to the cytoplasm. It is found in the cytosol. It localises to the cell membrane. Functionally, component of a complex required to localize phosphatidylinositol 4-kinase (PI4K) to the plasma membrane. The polypeptide is Hyccin 2 (Homo sapiens (Human)).